Here is a 487-residue protein sequence, read N- to C-terminus: L-tartrate/succinate antiporter (487 aa).

The next 14 membrane-spanning stretches (helical) occupy residues 10–30 (YLAPLAVIAIIALLPVPAGLE), 33–53 (TWLYFAVFTGVIVGLILEPVP), 54–74 (GAVVAMVGISIIAILSPWLLF), 93–113 (WAVSGFSNSVIWLIFAAFMFG), 137–157 (TLFLGYAVMFSELILAPVTPS), 189–209 (IGSYIMWMGIVADCVTSAIFL), 236–256 (FLGMLPLSILLVLLVPWLAYV), 292–312 (LMVGALVLWIFGGDYIDAAMV), 313–333 (GYSVVALMLLLRIISWDDIVS), 340–360 (VFFWLASLITLATGLNNTGFI), 370–390 (SLSGYSPTMVMVTLIVVFYLL), 393–413 (FFASATAYTCALAPMMIAAAL), 418–438 (IPLPVFCLMVGAAIGLGSILT), and 465–485 (IFGLIFLVLLVITGLLWMPVV).

Belongs to the SLC13A/DASS transporter (TC 2.A.47) family. DIT1 subfamily.

The protein localises to the cell inner membrane. It catalyses the reaction (2R,3R)-tartrate(out) + succinate(in) = (2R,3R)-tartrate(in) + succinate(out). Functionally, catalyzes the uptake of tartrate in exchange for intracellular succinate. Essential for anaerobic L-tartrate fermentation. The chain is L-tartrate/succinate antiporter (ttdT) from Shigella flexneri.